Reading from the N-terminus, the 83-residue chain is MSSGGLLLLLGLLTLCAELTPVSSKDRPKFCNVPPEPGRCNANVRAFYYNPRLRKCIEFTYGGCGGNANNFKSRGECKRTCAE.

The first 24 residues, 1–24, serve as a signal peptide directing secretion; that stretch reads MSSGGLLLLLGLLTLCAELTPVSS. One can recognise a BPTI/Kunitz inhibitor domain in the interval 31-81; sequence CNVPPEPGRCNANVRAFYYNPRLRKCIEFTYGGCGGNANNFKSRGECKRTC. Intrachain disulfides connect Cys-31–Cys-81, Cys-40–Cys-64, and Cys-56–Cys-77.

The protein belongs to the venom Kunitz-type family. Expressed by the venom gland.

It localises to the secreted. In terms of biological role, serine protease inhibitor. The polypeptide is Kunitz-type serine protease inhibitor A (Bungarus candidus (Malayan krait)).